A 316-amino-acid polypeptide reads, in one-letter code: Olfactory receptor 52A5 (316 aa).

Topologically, residues Met1–Cys27 are extracellular. An N-linked (GlcNAc...) asparagine glycan is attached at Asn5. Residues Trp28 to Leu48 traverse the membrane as a helical segment. The Cytoplasmic portion of the chain corresponds to Val49–Ser56. The chain crosses the membrane as a helical span at residues Leu57–Thr77. Residues Cys78–Phe101 lie on the Extracellular side of the membrane. Residues Gln102 to Leu122 traverse the membrane as a helical segment. Over Asp123–Gln141 the chain is Cytoplasmic. A helical transmembrane segment spans residues Phe142–Leu162. Residues Gly163–Lys199 lie on the Extracellular side of the membrane. A helical membrane pass occupies residues Ile200–Ser220. Residues Tyr221 to Ala240 lie on the Cytoplasmic side of the membrane. Residues Phe241 to Ser261 form a helical membrane-spanning segment. The Extracellular portion of the chain corresponds to Phe262–His276. Residues Ile277–Val297 traverse the membrane as a helical segment. Over Lys298–Thr316 the chain is Cytoplasmic.

It belongs to the G-protein coupled receptor 1 family.

It is found in the cell membrane. Its function is as follows. Odorant receptor. In Homo sapiens (Human), this protein is Olfactory receptor 52A5 (OR52A5).